The primary structure comprises 236 residues: Large ribosomal subunit protein uL1 (236 aa).

It belongs to the universal ribosomal protein uL1 family. In terms of assembly, part of the 50S ribosomal subunit.

Functionally, binds directly to 23S rRNA. The L1 stalk is quite mobile in the ribosome, and is involved in E site tRNA release. Its function is as follows. Protein L1 is also a translational repressor protein, it controls the translation of the L11 operon by binding to its mRNA. The polypeptide is Large ribosomal subunit protein uL1 (Corynebacterium efficiens (strain DSM 44549 / YS-314 / AJ 12310 / JCM 11189 / NBRC 100395)).